We begin with the raw amino-acid sequence, 657 residues long: tRNA 5-methylaminomethyl-2-thiouridine biosynthesis bifunctional protein MnmC (657 aa).

The tRNA (mnm(5)s(2)U34)-methyltransferase stretch occupies residues 1–235 (MSDAHNAQLD…KREMLAGPFQ (235 aa)). Residues 261-657 (IGAGLAGCAT…QLIRGTGSPT (397 aa)) are FAD-dependent cmnm(5)s(2)U34 oxidoreductase.

The protein in the N-terminal section; belongs to the methyltransferase superfamily. tRNA (mnm(5)s(2)U34)-methyltransferase family. It in the C-terminal section; belongs to the DAO family. It depends on FAD as a cofactor.

The protein localises to the cytoplasm. It carries out the reaction 5-aminomethyl-2-thiouridine(34) in tRNA + S-adenosyl-L-methionine = 5-methylaminomethyl-2-thiouridine(34) in tRNA + S-adenosyl-L-homocysteine + H(+). Catalyzes the last two steps in the biosynthesis of 5-methylaminomethyl-2-thiouridine (mnm(5)s(2)U) at the wobble position (U34) in tRNA. Catalyzes the FAD-dependent demodification of cmnm(5)s(2)U34 to nm(5)s(2)U34, followed by the transfer of a methyl group from S-adenosyl-L-methionine to nm(5)s(2)U34, to form mnm(5)s(2)U34. This is tRNA 5-methylaminomethyl-2-thiouridine biosynthesis bifunctional protein MnmC from Ectopseudomonas mendocina (strain ymp) (Pseudomonas mendocina).